Reading from the N-terminus, the 380-residue chain is Alpha-N-acetylneuraminate alpha-2,8-sialyltransferase ST8SIA3 (380 aa).

Over 1 to 17 (MRNCKMARVASVLGLVM) the chain is Cytoplasmic. A helical; Signal-anchor for type II membrane protein transmembrane segment spans residues 18-33 (LSVALLILSLISYVSL). Over 34 to 380 (KKENIFTTPK…LTKLTLSHCA (347 aa)) the chain is Lumenal. Residues Asn-93 and Asn-113 are each glycosylated (N-linked (GlcNAc...) asparagine). Disulfide bonds link Cys-162–Cys-313 and Cys-176–Cys-379. CMP-N-acetyl-beta-neuraminate-binding residues include Asn-167 and Asn-190. N-linked (GlcNAc...) asparagine glycosylation occurs at Asn-206. The CMP-N-acetyl-beta-neuraminate site is built by Ser-300, Thr-301, Gly-302, Trp-322, Tyr-336, and His-337. His-354 (proton donor/acceptor) is an active-site residue.

This sequence belongs to the glycosyltransferase 29 family. In terms of assembly, homodimer. Expressed in neurons in brain with higher expression in the striatum than in the hippocampus, cortex, and cerebellum (at protein level). Expressed in testes.

The protein resides in the golgi apparatus membrane. The catalysed reaction is a ganglioside GM3 (d18:1(4E)) + CMP-N-acetyl-beta-neuraminate = a ganglioside GD3 (d18:1(4E)) + CMP + H(+). It carries out the reaction a ganglioside GM3 + CMP-N-acetyl-beta-neuraminate = a ganglioside GD3 + CMP + H(+). It catalyses the reaction an N-acetyl-alpha-neuraminyl-(2-&gt;3)-beta-D-galactosyl derivative + CMP-N-acetyl-beta-neuraminate = an N-acetyl-alpha-neuraminyl-(2-&gt;8)-N-acetyl-alpha-neuraminyl-(2-&gt;3)-beta-D-galactosyl derivative + CMP + H(+). The enzyme catalyses an N-acetyl-alpha-neuraminyl-(2-&gt;3)-beta-D-galactosyl-(1-&gt;4)-N-acetyl-beta-D-glucosaminyl derivative + CMP-N-acetyl-beta-neuraminate = an alpha-Neu5Ac-(2-&gt;8)-alpha-Neu5Ac-(2-&gt;3)-beta-D-Gal-(1-&gt;4)-beta-D-GlcNAc derivative + CMP + H(+). The protein operates within protein modification; protein glycosylation. Functionally, catalyzes the transfer of sialic acid from a CMP-linked sialic acid donor onto a terminal alpha-2,3-, alpha-2,6-, or alpha-2,8-linked sialic acid of an acceptor, such as N-linked oligosaccharides of glycoproteins and glycolipids through alpha-2,8-linkages. Forms oligosialic and polysialic acid on various sialylated N-acetyllactosamine oligosaccharides of glycoproteins, including FETUB N-glycans, a2-HS-glycoprotein (AHSG) and alpha 2,3-sialylated glycosphingolipids, such as alpha 2,3-sialylparagloboside and ganglioside GM3 and to a lesser extent NCAM1 N-glycans. However, it is much more specific to N-linked oligosaccharides of glycoproteins than glycosphingolipids. 2,3-sialylparagloboside served as the best acceptor substrate among the glycolipids. alpha-Neu5Ac-(2-&gt;8)-alpha-Neu5Ac-(2-&gt;3)-beta-D-Gal-(1-&gt;4)-6S-D-GlcNAc and monosialyl and disialyl N-acetyllactosamines are the best acceptor substrates among glycoproteins. May play critical role in the striatum by mediating the formation of disialylated and trisialylated terminal glycotopes on N- and O-glycans of specific striatal proteins, regulating their distribution in lipid rafts, affecting their interaction with other binding partners, and subsequently modulating striatal functions. The protein is Alpha-N-acetylneuraminate alpha-2,8-sialyltransferase ST8SIA3 of Mus musculus (Mouse).